A 499-amino-acid polypeptide reads, in one-letter code: MSDNSTTKVTTNDSPSLTTTTSTTTAPTTTTTTTTTPTHNHDTTIAPGVVKKVYTSGRPPWYDSKGNLKNPLVIGVCGGSASGKTTVCDKIIANLNVRWVVLLSMDSFYKNLSKDNDPSKYNFDHPNAFDYDLMVKTISELRAGKKVNIPKYCFKTHSRLVHQDTVYGADVIILEGILTLYSKELRDLMDIKIFIDTDDDVRLARRLKRDIAERGRTLESVLHQYNTFVKPSFDDYIIPLKKYADIIVPRGSDNIVAINLLTNHIRLKLKERGFDPEKTAQLDLEGLELPSSIHVIKETNQIKAMLSILRNKDTKVGDFVFYSDRLCSLIIEEALTYLPFTEKIVTTPTGSLYHGEELNSRICALVVLRAGGCMEQPLRSICKGIRTGKVLIQSDEMKKPHLFYEKLPNVTDSHVLVLDPTIATGASSEMAIRVLLDHGVPENKIIFVSVIASLKGILYLNYRFPDVQFVVSAIDKELSDEGFILPGCGFYSNRYFGTH.

Residues 1 to 44 (MSDNSTTKVTTNDSPSLTTTTSTTTAPTTTTTTTTTPTHNHDTT) are disordered. Low complexity predominate over residues 10–38 (TTNDSPSLTTTTSTTTAPTTTTTTTTTPT). 78–85 (GGSASGKT) lines the ATP pocket.

Belongs to the uridine kinase family.

The enzyme catalyses uridine + ATP = UMP + ADP + H(+). The catalysed reaction is cytidine + ATP = CMP + ADP + H(+). Its pathway is pyrimidine metabolism; CTP biosynthesis via salvage pathway; CTP from cytidine: step 1/3. The protein operates within pyrimidine metabolism; UMP biosynthesis via salvage pathway; UMP from uridine: step 1/1. In terms of biological role, catalyzes the conversion of uridine into uridine monophosphate and cytidine into cytidine monophosphate in the pyrimidine salvage pathway. This is Uridine-cytidine kinase A (udkA) from Dictyostelium discoideum (Social amoeba).